The chain runs to 78 residues: Small ribosomal subunit protein bS18 (78 aa).

It belongs to the bacterial ribosomal protein bS18 family. In terms of assembly, part of the 30S ribosomal subunit. Forms a tight heterodimer with protein bS6.

In terms of biological role, binds as a heterodimer with protein bS6 to the central domain of the 16S rRNA, where it helps stabilize the platform of the 30S subunit. The polypeptide is Small ribosomal subunit protein bS18 (Beutenbergia cavernae (strain ATCC BAA-8 / DSM 12333 / CCUG 43141 / JCM 11478 / NBRC 16432 / NCIMB 13614 / HKI 0122)).